We begin with the raw amino-acid sequence, 435 residues long: D-amino acid dehydrogenase (435 aa).

Position 3-17 (3-17 (VIVLGGGVLGVSTAW)) interacts with FAD.

This sequence belongs to the DadA oxidoreductase family. FAD serves as cofactor.

The enzyme catalyses a D-alpha-amino acid + A + H2O = a 2-oxocarboxylate + AH2 + NH4(+). Its pathway is amino-acid degradation; D-alanine degradation; NH(3) and pyruvate from D-alanine: step 1/1. Its function is as follows. Oxidative deamination of D-amino acids. In Chromobacterium violaceum (strain ATCC 12472 / DSM 30191 / JCM 1249 / CCUG 213 / NBRC 12614 / NCIMB 9131 / NCTC 9757 / MK), this protein is D-amino acid dehydrogenase.